Reading from the N-terminus, the 458-residue chain is Probable alpha-L-glutamate ligase (458 aa).

Positions 1-162 are unknown; the sequence is MSDNKFIIGS…YGVKTAKKSG (162 aa). Residues 163-458 are alpha-L-glutamate ligase; the sequence is LKIGLLASNP…IEKKLGWKAD (296 aa). The region spanning 267–450 is the ATP-grasp domain; it reads LQLLQKNNLD…IAGAMIESIE (184 aa). Residues Lys304, 341–342, Asp350, and 374–376 contribute to the ATP site; these read EF and RAN. The Mg(2+) site is built by Asp411, Glu423, and Asn425. Residues Asp411, Glu423, and Asn425 each coordinate Mn(2+).

The protein in the C-terminal section; belongs to the RimK family. Mg(2+) is required as a cofactor. It depends on Mn(2+) as a cofactor.

The chain is Probable alpha-L-glutamate ligase from Shewanella pealeana (strain ATCC 700345 / ANG-SQ1).